The following is a 597-amino-acid chain: Probable translation initiation factor IF-2 (597 aa).

Residues 10–226 (LRTPIVAVLG…LMGLSQRFMK (217 aa)) enclose the tr-type G domain. Residues 19 to 26 (GHVDHGKT) are G1. Position 19–26 (19–26 (GHVDHGKT)) interacts with GTP. The interval 44 to 48 (AITQH) is G2. Residues 81 to 84 (DTPG) are G3. GTP contacts are provided by residues 81–85 (DTPGH) and 135–138 (NKVD). The G4 stretch occupies residues 135–138 (NKVD). Positions 203–205 (SAI) are G5.

The protein belongs to the TRAFAC class translation factor GTPase superfamily. Classic translation factor GTPase family. IF-2 subfamily.

Functionally, function in general translation initiation by promoting the binding of the formylmethionine-tRNA to ribosomes. Seems to function along with eIF-2. The sequence is that of Probable translation initiation factor IF-2 from Halorubrum lacusprofundi (strain ATCC 49239 / DSM 5036 / JCM 8891 / ACAM 34).